The following is a 469-amino-acid chain: Glutamine synthetase (469 aa).

The region spanning 13 to 97 is the GS beta-grasp domain; that stretch reads KEVRYVDLRF…LRCDIVEPAT (85 aa). A GS catalytic domain is found at 105–469; that stretch reads PRSIAKRAEA…PVEFDMYYSL (365 aa). Positions 130 and 132 each coordinate Mg(2+). ATP is bound at residue Glu208. Mg(2+) is bound by residues Glu213 and Glu221. Residues 265–266 and Gly266 contribute to the L-glutamate site; that span reads NG. His270 provides a ligand contact to Mg(2+). Residues 272–274 and Ser274 each bind ATP; that span reads HQS. 3 residues coordinate L-glutamate: Arg322, Glu328, and Arg340. ATP is bound by residues Arg340, Arg345, and Lys353. Glu358 provides a ligand contact to Mg(2+). Arg360 lines the L-glutamate pocket. Tyr398 is modified (O-AMP-tyrosine).

The protein belongs to the glutamine synthetase family. In terms of assembly, oligomer of 12 subunits arranged in the form of two hexameric ring. It depends on Mg(2+) as a cofactor.

It is found in the cytoplasm. It carries out the reaction L-glutamate + NH4(+) + ATP = L-glutamine + ADP + phosphate + H(+). The activity of this enzyme could be controlled by adenylation under conditions of abundant glutamine. Its function is as follows. Catalyzes the ATP-dependent biosynthesis of glutamine from glutamate and ammonia. The chain is Glutamine synthetase from Methylococcus capsulatus (strain ATCC 33009 / NCIMB 11132 / Bath).